A 204-amino-acid chain; its full sequence is Peptide deformylase (204 aa).

2 residues coordinate Fe cation: Cys-131 and His-174. Glu-175 is a catalytic residue. His-178 contributes to the Fe cation binding site.

Belongs to the polypeptide deformylase family. It depends on Fe(2+) as a cofactor.

It catalyses the reaction N-terminal N-formyl-L-methionyl-[peptide] + H2O = N-terminal L-methionyl-[peptide] + formate. Functionally, removes the formyl group from the N-terminal Met of newly synthesized proteins. Requires at least a dipeptide for an efficient rate of reaction. N-terminal L-methionine is a prerequisite for activity but the enzyme has broad specificity at other positions. This chain is Peptide deformylase, found in Streptococcus pyogenes serotype M1.